The following is a 124-amino-acid chain: Small ribosomal subunit protein uS12 (124 aa).

At D89 the chain carries 3-methylthioaspartic acid. A disordered region spans residues 104-124 (ATGVKDRKQGRSKYGAKRPKE). Positions 113 to 124 (GRSKYGAKRPKE) are enriched in basic residues.

This sequence belongs to the universal ribosomal protein uS12 family. Part of the 30S ribosomal subunit. Contacts proteins S8 and S17. May interact with IF1 in the 30S initiation complex.

In terms of biological role, with S4 and S5 plays an important role in translational accuracy. Interacts with and stabilizes bases of the 16S rRNA that are involved in tRNA selection in the A site and with the mRNA backbone. Located at the interface of the 30S and 50S subunits, it traverses the body of the 30S subunit contacting proteins on the other side and probably holding the rRNA structure together. The combined cluster of proteins S8, S12 and S17 appears to hold together the shoulder and platform of the 30S subunit. The sequence is that of Small ribosomal subunit protein uS12 from Picosynechococcus sp. (strain ATCC 27264 / PCC 7002 / PR-6) (Agmenellum quadruplicatum).